The following is a 100-amino-acid chain: Probable DNA-binding protein HU (100 aa).

Belongs to the bacterial histone-like protein family.

Its function is as follows. Histone-like DNA-binding protein which is capable of wrapping DNA to stabilize it, and thus to prevent its denaturation under extreme environmental conditions. This is Probable DNA-binding protein HU (hup) from Chlamydia muridarum (strain MoPn / Nigg).